The sequence spans 755 residues: Transcription factor kayak, isoforms A/B/F (755 aa).

Composition is skewed to low complexity over residues phenylalanine 23–glutamine 66 and glutamine 149–serine 159. 4 disordered regions span residues phenylalanine 23–valine 75, glutamine 149–proline 168, leucine 316–serine 350, and glycine 383–valine 440. Over residues leucine 316–glutamine 333 the composition is skewed to polar residues. 2 stretches are compositionally biased toward low complexity: residues threonine 341 to serine 350 and glycine 383 to threonine 397. The bZIP domain maps to glutamate 418 to histidine 481. The tract at residues lysine 420 to arginine 439 is basic motif. The leucine-zipper stretch occupies residues leucine 446–leucine 453. Residues alanine 510–glycine 531 show a composition bias toward low complexity. Disordered stretches follow at residues alanine 510–leucine 552 and aspartate 716–leucine 755. A compositionally biased stretch (polar residues) spans threonine 539–proline 549. Serine 548 carries the post-translational modification Phosphoserine.

It belongs to the bZIP family. Fos subfamily. Homodimer. Heterodimer with Jra. The kay-Jra heterodimer binds more stably to the AP-1 site than either of the two proteins alone. In terms of tissue distribution, early expression in the embryo is mesodermal and some of this expression is localized to a region surrounding the cephalic furrow. Later in embryonic development expression is ectodermal, corresponding to muscle attachment sites. Also observed in part of the mid- and hindgut and in the anal pad.

It localises to the nucleus. Its function is as follows. Developmentally regulated transcription factor AP-1 binds and recognizes the enhancer DNA sequence: 5'-TGA[CG]TCA-3'. May play a role in the function or determination of a particular subset of cells in the developing embryo. It is able to carry out its function either independently of or in conjunction with Jra. This is Transcription factor kayak, isoforms A/B/F (kay) from Drosophila melanogaster (Fruit fly).